A 1004-amino-acid chain; its full sequence is Cadmium/zinc-transporting ATPase HMA3 (1004 aa).

One can recognise an HMA domain in the interval 42-108 (KKTYLDVLGV…ALNKAGLEAS (67 aa)). 8 consecutive transmembrane segments (helical) span residues 120 to 140 (RWPS…FFEW), 144 to 164 (PLQC…VRRG), 171 to 191 (LSLD…CLGD), 193 to 213 (TEAG…TLAC), 340 to 360 (CAKY…LIPA), 371 to 391 (WKLA…LSTP), 683 to 703 (IAVN…LAAA), and 707 to 727 (VLWA…LNSM). The disordered stretch occupies residues 931-952 (TGCGASKRSPPAEGSCSGGEGG).

It belongs to the cation transport ATPase (P-type) (TC 3.A.3) family. Type IB subfamily. Specifically expressed in roots.

The protein localises to the vacuole membrane. The enzyme catalyses Zn(2+)(in) + ATP + H2O = Zn(2+)(out) + ADP + phosphate + H(+). The catalysed reaction is Cd(2+)(in) + ATP + H2O = Cd(2+)(out) + ADP + phosphate + H(+). Functionally, root-specific cadmium (Cd) transporter that mediates Cd efflux in root vacuoles. Involved in Cd detoxification by sequestrating Cd into root vacuoles and limiting translocation of Cd from the roots to the shoots, and accumulation in grains. In Oryza sativa subsp. japonica (Rice), this protein is Cadmium/zinc-transporting ATPase HMA3.